We begin with the raw amino-acid sequence, 264 residues long: Undecaprenyl-diphosphatase (264 aa).

8 consecutive transmembrane segments (helical) span residues 1-21, 39-59, 87-107, 111-131, 144-164, 187-207, 208-228, and 244-264; these read MDLI…FLPI, QGLA…AVYF, WYLI…DDLI, LRST…LWVA, IALS…IPGT, FSFL…GLQL, VLSA…LSAV, and IGML…FIAV.

Belongs to the UppP family.

The protein resides in the cell inner membrane. The enzyme catalyses di-trans,octa-cis-undecaprenyl diphosphate + H2O = di-trans,octa-cis-undecaprenyl phosphate + phosphate + H(+). Its function is as follows. Catalyzes the dephosphorylation of undecaprenyl diphosphate (UPP). Confers resistance to bacitracin. In Teredinibacter turnerae (strain ATCC 39867 / T7901), this protein is Undecaprenyl-diphosphatase.